Here is a 302-residue protein sequence, read N- to C-terminus: Glycine--tRNA ligase alpha subunit (302 aa).

Belongs to the class-II aminoacyl-tRNA synthetase family. Tetramer of two alpha and two beta subunits.

The protein localises to the cytoplasm. The enzyme catalyses tRNA(Gly) + glycine + ATP = glycyl-tRNA(Gly) + AMP + diphosphate. This is Glycine--tRNA ligase alpha subunit from Haemophilus ducreyi (strain 35000HP / ATCC 700724).